Consider the following 172-residue polypeptide: C-phycocyanin-2 beta subunit (172 aa).

Asparagine 72 is modified (N4-methylasparagine). The (2R,3E)-phycocyanobilin site is built by cysteine 82 and cysteine 153.

Belongs to the phycobiliprotein family. Heterodimer of an alpha and a beta subunit, which further assembles into trimers and the trimers into hexamers. Contains two covalently linked bilin chromophores.

The protein localises to the cellular thylakoid membrane. Its function is as follows. Light-harvesting photosynthetic bile pigment-protein from the phycobiliprotein complex (phycobilisome, PBS). Phycocyanin is the major phycobiliprotein in the PBS rod. The chain is C-phycocyanin-2 beta subunit (cpcB2) from Microchaete diplosiphon (Fremyella diplosiphon).